Consider the following 157-residue polypeptide: Tuberoinfundibular peptide of 39 residues (157 aa).

The signal sequence occupies residues 1-25; that stretch reads MALSLPPRPALLFLVLMSVTLMASA. Residues 26-116 constitute a propeptide that is removed on maturation; the sequence is FPQPQLRPLQ…DWPSRVGHQQ (91 aa).

It belongs to the parathyroid hormone family.

It is found in the secreted. Plays a role as a potent and selective agonist of pth2r resulting in adenyl cyclase activation and intracellular calcium level elevation. The polypeptide is Tuberoinfundibular peptide of 39 residues (Danio rerio (Zebrafish)).